The sequence spans 396 residues: Protein NDRG1-B (396 aa).

Residues 326 to 396 (RSRTGSAASS…NTPKSMEVSC (71 aa)) form a disordered region. The span at 327-340 (SRTGSAASSSSQDG) shows a compositional bias: low complexity. Repeat copies occupy residues 340-349 (GNRSRSHTNE), 350-359 (GSRSRSQTGD), 360-369 (GNRSRAHTGD), and 370-379 (GNRSRSHTDT). The 4 X 10 AA tandem repeats of G-[NS]-R-S-R-[AS]-[HQ]-T-[DGN]-[DET] stretch occupies residues 340-379 (GNRSRSHTNEGSRSRSQTGDGNRSRAHTGDGNRSRSHTDT). The segment covering 366–377 (HTGDGNRSRSHT) has biased composition (basic and acidic residues). The segment covering 378–390 (DTNNVNSDHNTPK) has biased composition (polar residues).

The protein belongs to the NDRG family.

Its function is as follows. May be involved in pronephros development, after specification of the pronephros. The polypeptide is Protein NDRG1-B (ndrg1-b) (Xenopus laevis (African clawed frog)).